The primary structure comprises 291 residues: U3 small nucleolar ribonucleoprotein protein IMP4 (291 aa).

The Brix domain occupies 83–264; sequence PKVMITTSRD…LYMIRLGTLE (182 aa).

As to quaternary structure, part of the small subunit (SSU) processome, composed of more than 70 proteins and the RNA chaperone small nucleolar RNA (snoRNA) U3. Component of a heterotrimeric complex containing IMP3, IMP4 and MPHOSPH10. Interacts with MPHOSPH10.

The protein resides in the nucleus. It localises to the nucleolus. Functionally, component of the 60-80S U3 small nucleolar ribonucleoprotein (U3 snoRNP). Required for the early cleavages during pre-18S ribosomal RNA processing. Part of the small subunit (SSU) processome, first precursor of the small eukaryotic ribosomal subunit. During the assembly of the SSU processome in the nucleolus, many ribosome biogenesis factors, an RNA chaperone and ribosomal proteins associate with the nascent pre-rRNA and work in concert to generate RNA folding, modifications, rearrangements and cleavage as well as targeted degradation of pre-ribosomal RNA by the RNA exosome. The protein is U3 small nucleolar ribonucleoprotein protein IMP4 of Homo sapiens (Human).